The following is a 356-amino-acid chain: Septin-12 (356 aa).

Residues 1–23 (MDERRTPSPCSSRPSSPRTPPCE) are disordered. Positions 7 to 16 (PSPCSSRPSS) are enriched in low complexity. One can recognise a Septin-type G domain in the interval 44–315 (TGFEFNIMVV…ENYRVLRLNE (272 aa)). Residues 44-317 (TGFEFNIMVV…YRVLRLNESH (274 aa)) form an interaction with SEPTIN7 region. The G1 motif stretch occupies residues 54–61 (GQSGLGKS). GTP is bound by residues 54–61 (GQSGLGKS), threonine 87, glycine 113, 193–201 (RADSLTIEE), glycine 249, and arginine 264. A G3 motif region spans residues 110-113 (DTPG). A G4 motif region spans residues 192–195 (ARAD). The tract at residues 256–356 (VNGRCVLGRK…RSKDPRDDEC (101 aa)) is self-association (via N-terminus) to polymerize octameric septin 12-7-6-2/4-2/4-6-7-12 filaments. Positions 330–356 (PASPGQLMAPGPEKVRKRSKDPRDDEC) are disordered.

Belongs to the TRAFAC class TrmE-Era-EngA-EngB-Septin-like GTPase superfamily. Septin GTPase family. In terms of assembly, septins polymerize into heterooligomeric protein complexes that form filaments, and can associate with cellular membranes, actin filaments and microtubules. GTPase activity is required for filament formation. Interacts with SEPTIN6 and SEPTIN11. Self-associates. Component of a octameric complex consisting of SEPTIN12, SEPTIN7, SEPTIN6 and SEPTIN2 or SEPTIN4 in the order 12-7-6-2-2-6-7-12 or 12-7-6-4-4-6-7-12 and located in the sperm annulus; the octamer polymerizes into filaments via the SEPTIN12 N- and C-termini; the SEPTIN12:SEPTIN7 association is mediated by the GTP-binding domains. Interacts with SPAG4 and LMNB1. Associates with alpha- and beta-tubulins. In terms of tissue distribution, predominantly expressed in testis and epididymis. Component of the sperm tail annulus (at protein level).

It localises to the cytoplasm. The protein localises to the cytoskeleton. Its subcellular location is the spindle. The protein resides in the cell projection. It is found in the cilium. It localises to the flagellum. Its function is as follows. Filament-forming cytoskeletal GTPase. May play a role in cytokinesis (Potential). Involved in spermatogenesis. Involved in the morphogenesis of sperm heads and the elongation of sperm tails probably implicating the association with alpha- and beta-tubulins. Forms a filamentous structure with SEPTIN7, SEPTIN6, SEPTIN2 and probably SEPTIN4 at the sperm annulus which is required for the structural integrity and motility of the sperm tail during postmeiotic differentiation. This chain is Septin-12, found in Rattus norvegicus (Rat).